The primary structure comprises 469 residues: Protopanaxadiol 6-hydroxylase (469 aa).

A helical membrane pass occupies residues 3–23; that stretch reads LFISSQLLLLLVFCLFLFWNF. Position 416 (cysteine 416) interacts with heme.

It belongs to the cytochrome P450 family. The cofactor is heme. In terms of tissue distribution, accumulates ubiquitously in all organs of plants, including roots, stems and leaves.

It localises to the membrane. The catalysed reaction is (20S)-protopanaxadiol + reduced [NADPH--hemoprotein reductase] + O2 = (20S)-protopanaxatriol + oxidized [NADPH--hemoprotein reductase] + H2O + H(+). Its pathway is secondary metabolite biosynthesis; terpenoid biosynthesis. Activated by N,N'-dicyclohexylcarbodiimide (DCCD) thus leading to increased ginsenosides accumulation. Functionally, component of the dammarane-type triterpene saponins (e.g. PPT-type ginsenosides or panaxosides) biosynthetic pathway. Catalyzes the formation of protopanaxatriol from protopanaxadiol during ginsenoside biosynthesis, a class of tetracyclic triterpenoid saponins. The sequence is that of Protopanaxadiol 6-hydroxylase from Panax ginseng (Korean ginseng).